The sequence spans 1004 residues: Zinc finger protein 316 (1004 aa).

Residues 1 to 148 form a disordered region; the sequence is MAALHTTPDS…EEEEDEDEDD (148 aa). N-acetylalanine is present on Ala2. Residue Thr7 is modified to Phosphothreonine. Position 10 is a phosphoserine (Ser10). The span at 21–60 shows a compositional bias: acidic residues; that stretch reads GSECDPDQEEEEEEEEKGEEVQEVEEEEEEIVVEEEEEGV. Positions 61 to 72 are enriched in low complexity; the sequence is AEVVQDAQVEAV. The span at 73 to 95 shows a compositional bias: acidic residues; it reads AEVEVEADVEEEDVKEVLAEEEC. A Phosphoserine modification is found at Ser112. Positions 132-148 are enriched in acidic residues; sequence EDLEEEEEEEEDEDEDD. Residues 158–229 form the KRAB domain; it reads VTFEDVAVYF…DSPRPEEGDI (72 aa). 5 C2H2-type zinc fingers span residues 345–367, 373–395, 401–423, 429–451, and 457–479; these read TTCD…QRYH, FGCE…QRTH, FPCP…RRIH, YRCA…QRTH, and YPCS…QAVH. A C2H2-type 6; degenerate zinc finger spans residues 485–512; that stretch reads HCCPDCGQAFRLRADFQRHRRGGGCAEA. A disordered region spans residues 508–574; the sequence is GCAEAGGDGP…TPSGKVDPAP (67 aa). Residues 531–557 show a composition bias toward acidic residues; that stretch reads EDTDPGPEGSEVGEADGEAEAAAEERE. C2H2-type zinc fingers lie at residues 691–713, 719–741, 747–769, 775–797, and 803–825; these read WICS…QRYH, HRCA…RRTH, FPCP…VRGH, FVCG…GRAH, and YACG…QWAH. Lys829 participates in a covalent cross-link: Glycyl lysine isopeptide (Lys-Gly) (interchain with G-Cter in SUMO2). C2H2-type zinc fingers lie at residues 831–853, 859–881, 887–909, and 915–937; these read HRCP…RRTH, FRCA…RRGH, FPCP…QRTH, and YACA…MKTH. Residues 936 to 976 are disordered; that stretch reads THRGATAAPGSGSAPAPAPKPEAAAKGPSSAGPGERGSALL. The span at 939-968 shows a compositional bias: low complexity; it reads GATAAPGSGSAPAPAPKPEAAAKGPSSAGP. A Glycyl lysine isopeptide (Lys-Gly) (interchain with G-Cter in SUMO2) cross-link involves residue Lys955.

It belongs to the krueppel C2H2-type zinc-finger protein family.

It localises to the nucleus. In terms of biological role, may be involved in transcriptional regulation. The polypeptide is Zinc finger protein 316 (ZNF316) (Homo sapiens (Human)).